The primary structure comprises 1507 residues: Transient receptor potential cation channel subfamily M member 2 (1507 aa).

Residues 1–11 (MEPLDQRRTDS) are compositionally biased toward basic and acidic residues. The segment at 1–24 (MEPLDQRRTDSDQEEGFGVQSRRA) is disordered. The Cytoplasmic portion of the chain corresponds to 1 to 751 (MEPLDQRRTD…WWGQLCVDNG (751 aa)). Residues Thr173, Asn178, Arg301, Gly332, and Thr335 each coordinate ADP-D-ribose. At Thr739 the chain carries Phosphothreonine. The stretch at 752–768 (LWRIILCMLAFPLLFTG) is an intramembrane region. Over 769-793 (FISFREKRLQALCRLARVRAFFNAP) the chain is Cytoplasmic. A helical transmembrane segment spans residues 794–814 (VVIFYLNILSYFAFLCLFAYV). Residues 815–825 (LMVDFQPSPSW) are Extracellular-facing. A helical membrane pass occupies residues 826–846 (CEYLIYLWLFSLVCEETRQLF). 2 residues coordinate Ca(2+): Glu841 and Gln844. Residues 847–865 (YDPDGCGLMKMASLYFSDF) are Cytoplasmic-facing. A helical membrane pass occupies residues 866 to 886 (WNKLDVGAILLFIAGLTCRLI). Residue Asn867 coordinates Ca(2+). The Extracellular portion of the chain corresponds to 887–894 (PATLYPGR). Residues 895–915 (IILSLDFIMFCLRLMHIFTIS) traverse the membrane as a helical segment. The Cytoplasmic segment spans residues 916 to 927 (KTLGPKIIIVKR). Residues 928–948 (MMKDVFFFLFLLAVWVVSFGV) traverse the membrane as a helical segment. Over 949 to 968 (AKQAILIHNESRVDWIFRGV) the chain is Extracellular. The segment at residues 969–983 (IYHSYLTIFGQIPTY) is an intramembrane region (pore-forming). The short motif at 977-980 (FGQI) is the Selectivity filter element. At 984–1020 (IDGVNFSMDQCSPNGTDPYKPKCPESDWTGQAPAFPE) the chain is on the extracellular side. A disulfide bridge connects residues Cys994 and Cys1006. Residues 1021 to 1042 (WLTVTLLCLYLLFANILLLNLL) traverse the membrane as a helical segment. Residues 1043–1077 (IAMFNYTFQEVQEHTDQIWKFQRHDLIEEYHGRPP) are Cytoplasmic-facing. Ca(2+) is bound at residue Glu1071. The stretch at 1078–1096 (APPPLILLSHLQLLIKRIV) is an intramembrane region. The Cytoplasmic segment spans residues 1097-1507 (LKIPAKRHKQ…KVASLFGAHF (411 aa)). A Nudix hydrolase domain is found at 1351-1502 (RWKRNQGGGI…KKILQKVASL (152 aa)). Position 1379 (Ser1379) interacts with ADP-D-ribose. Residues 1387–1408 (GSREPGKMLPRKLKQVLQQEYW) carry the Nudix box motif. ADP-D-ribose is bound by residues Asp1428, Arg1430, Tyr1489, and Asn1491.

This sequence belongs to the transient receptor (TC 1.A.4) family. LTrpC subfamily. TRPM2 sub-subfamily. Homotetramer. Post-translationally, phosphorylation of TRPM2 at Thr-739 by protein kinase C (PKC) counteracts the effect of cytosolic Ca(2+) and elevates the temperature threshold. As to expression, detected in pancreas beta-cells. Detected in fetal brain cortex neurons (at protein level).

It localises to the cell membrane. The protein localises to the perikaryon. Its subcellular location is the cell projection. It is found in the cytoplasmic vesicle. The protein resides in the lysosome. The enzyme catalyses Ca(2+)(in) = Ca(2+)(out). It carries out the reaction Na(+)(in) = Na(+)(out). With respect to regulation, activated by intracellular ADP-ribose, beta-NAD (NAD(+)) and similar compounds, and by oxidative stress caused by reactive oxygen or nitrogen species. Ca(2+) and PI(4,5)P2 are required for channel opening by ADP-ribose. Activation by ADP-ribose and beta-NAD is strongly increased by moderate heat (35 to 40 degrees Celsius). Likewise, reactive oxygen species lower the threshold for activation by moderate heat (37 degrees Celsius). Activated by moderate heat (35 to 40 degrees Celsius). Inactivated by exposure to extracellular pH between 4.0 and 6.5; irreversibly inactivated when open channels are exposed to extracellular pH between 4.0 and 6.5, while pre-exposure of closed channels to extracellular pH 5.5 gives rise to currents that rapidly inactivate, but protects against irreversible inactivation. Inactivated by intracellular ATP. Activated by arachidonic acid. Inhibited by 2-aminoethyl diphenylborinate (2-APB). Its function is as follows. Nonselective, voltage-independent cation channel that mediates Na(+) and Ca(2+) influx, leading to increased cytoplasmic Ca(2+) levels. Functions as a ligand-gated ion channel gated by intracellular adenosine diphosphate ribose (ADP-ribose), Ca(2+), warm temperature, and oxidative stress. The precise physiological activators are under debate; the true, physiological activators may be ADP-ribose and ADP-ribose-2'-phosphate. Binding of ADP-ribose to the cytoplasmic Nudix domain causes a conformation change; the channel is primed but still requires Ca(2+) binding to trigger channel opening. Extracellular Ca(2+) passes through the channel and increases channel activity. Also contributes to Ca(2+) release from intracellular stores in response to ADP-ribose. Plays a role in numerous processes that involve signaling via intracellular Ca(2+) levels. Besides, mediates the release of lysosomal Zn(2+) stores in response to reactive oxygen species, leading to increased cytosolic Zn(2+) levels. Plays a role in insulin secretion, a process that requires increased cytoplasmic Ca(2+) levels. Required for normal IFNG and cytokine secretion and normal innate immune immunity in response to bacterial infection. Required for normal phagocytosis and cytokine release by macrophages exposed to zymosan (in vitro). Plays a role in dendritic cell differentiation and maturation, and in dendritic cell chemotaxis via its role in regulating cytoplasmic Ca(2+) levels. Plays a role in the regulation of the reorganization of the actin cytoskeleton and filopodia formation in response to reactive oxygen species via its function in increasing cytoplasmic Ca(2+) and Zn(2+) levels. Confers susceptibility to cell death following oxidative stress. The sequence is that of Transient receptor potential cation channel subfamily M member 2 from Rattus norvegicus (Rat).